Consider the following 254-residue polypeptide: Dolichol-phosphate mannosyltransferase subunit 1 (254 aa).

GDP-alpha-D-mannose contacts are provided by P25, Y27, E29, V56, D58, D111, A112, D113, R140, and R227. D113 serves as a coordination point for Mg(2+). Residue D113 participates in Mn(2+) binding.

It belongs to the glycosyltransferase 2 family. Component of the dolichol-phosphate mannose (DPM) synthase complex composed of dpm1, dpm2 and dpm3. Mg(2+) serves as cofactor. Mn(2+) is required as a cofactor. The cofactor is Ca(2+).

It localises to the endoplasmic reticulum. The catalysed reaction is a di-trans,poly-cis-dolichyl phosphate + GDP-alpha-D-mannose = a di-trans,poly-cis-dolichyl beta-D-mannosyl phosphate + GDP. It participates in protein modification; protein glycosylation. In terms of biological role, transfers mannose from GDP-mannose to dolichol monophosphate to form dolichol phosphate mannose (Dol-P-Man) which is the mannosyl donor in pathways leading to N-glycosylation, glycosyl phosphatidylinositol membrane anchoring, and O-mannosylation of proteins; catalytic subunit of the dolichol-phosphate mannose (DPM) synthase complex. This is Dolichol-phosphate mannosyltransferase subunit 1 (dpm1) from Dictyostelium discoideum (Social amoeba).